The sequence spans 1029 residues: Serine/threonine-protein kinase KSP1 (1029 aa).

A Protein kinase domain is found at 18 to 351 (YQKIEDISEG…TELQNLSEYT (334 aa)). ATP contacts are provided by residues 27 to 35 (GSYGYVSLA) and Lys-47. Over residues 56–79 (GQYDGPQDDENDCDSSDCDDDEDT) the composition is skewed to acidic residues. Residues 56–105 (GQYDGPQDDENDCDSSDCDDDEDTKVDTDRHENENGNASSNNGSSREKKH) are disordered. The segment covering 80–89 (KVDTDRHENE) has biased composition (basic and acidic residues). Low complexity predominate over residues 90-99 (NGNASSNNGS). The Proton acceptor role is filled by Asp-207. A disordered region spans residues 377 to 397 (VPPSSAPVSLPTPISSSNKQH). Residues Ser-416 and Ser-419 each carry the phosphoserine modification. Phosphothreonine is present on residues Thr-501, Thr-504, and Thr-526. A Phosphoserine modification is found at Ser-529. Positions 532-570 (HRYMEGFSNNNNKQYRQNRNYNNNNNNSNNNHGSNYNNF) are disordered. The segment covering 538 to 570 (FSNNNNKQYRQNRNYNNNNNNSNNNHGSNYNNF) has biased composition (low complexity). Ser-646 is modified (phosphoserine). The segment at 732 to 824 (STNHNNNGNN…SDSKELEQER (93 aa)) is disordered. Positions 734–743 (NHNNNGNNNH) are enriched in low complexity. The span at 744-754 (IDTNSTTNQYH) shows a compositional bias: polar residues. A compositionally biased stretch (basic and acidic residues) spans 813 to 824 (HSSDSKELEQER). Residues Ser-845 and Ser-884 each carry the phosphoserine modification. The disordered stretch occupies residues 949–978 (EYEGESDKMAHGKMEGGDNESSSTSPDERQ). A compositionally biased stretch (basic and acidic residues) spans 953–964 (ESDKMAHGKMEG). A Phosphothreonine modification is found at Thr-1005. The residue at position 1014 (Ser-1014) is a Phosphoserine.

This sequence belongs to the protein kinase superfamily. Ser/Thr protein kinase family. CK2 subfamily. In terms of processing, phosphorylated by PKA in a TORC1-dependent manner. Phosphorylation at PKA consensus sites RRxS/T decreases upon rapamycin treatment.

Its subcellular location is the nucleus. It carries out the reaction L-seryl-[protein] + ATP = O-phospho-L-seryl-[protein] + ADP + H(+). It catalyses the reaction L-threonyl-[protein] + ATP = O-phospho-L-threonyl-[protein] + ADP + H(+). May act on PRP20. In Saccharomyces cerevisiae (strain ATCC 204508 / S288c) (Baker's yeast), this protein is Serine/threonine-protein kinase KSP1 (KSP1).